The following is a 990-amino-acid chain: Serine/threonine-protein kinase ATG1 (990 aa).

In terms of domain architecture, Protein kinase spans 15–334 (FVIENEIGKG…FDDFFASPVI (320 aa)). ATP is bound by residues 21 to 29 (IGKGSFAVV) and K44. D165 functions as the Proton acceptor in the catalytic mechanism. Residues 375 to 408 (VSSIEASTQQPGVQPPVSTATSPPALESRSTQEA) are compositionally biased toward polar residues. Disordered stretches follow at residues 375–499 (VSSI…GGED), 529–566 (SRLGLASRRPSRLSRLSSGPLPSAPGASPPTAPPTILS), 579–614 (ASTGAFALPPGSRPSSFPRRASLSSSGSPSTRQGGQ), 750–784 (LSQELDSSTATSGISPSRNSVQGSARRVGSISSSS), and 970–990 (SPVGVDAEARPGVSRSRTESP). Low complexity-rich tracts occupy residues 529 to 554 (SRLGLASRRPSRLSRLSSGPLPSAPG) and 587 to 613 (PPGSRPSSFPRRASLSSSGSPSTRQGG). Over residues 750–771 (LSQELDSSTATSGISPSRNSVQ) the composition is skewed to polar residues. Low complexity predominate over residues 772 to 784 (GSARRVGSISSSS).

The protein belongs to the protein kinase superfamily. Ser/Thr protein kinase family. APG1/unc-51/ULK1 subfamily. In terms of assembly, homodimer. Forms a ternary complex with ATG13 and ATG17.

The protein resides in the cytoplasm. The protein localises to the preautophagosomal structure membrane. The catalysed reaction is L-seryl-[protein] + ATP = O-phospho-L-seryl-[protein] + ADP + H(+). It catalyses the reaction L-threonyl-[protein] + ATP = O-phospho-L-threonyl-[protein] + ADP + H(+). In terms of biological role, serine/threonine protein kinase involved in the cytoplasm to vacuole transport (Cvt) and found to be essential in autophagy, where it is required for the formation of autophagosomes. Involved in the clearance of protein aggregates which cannot be efficiently cleared by the proteasome. Required for selective autophagic degradation of the nucleus (nucleophagy) as well as for mitophagy which contributes to regulate mitochondrial quantity and quality by eliminating the mitochondria to a basal level to fulfill cellular energy requirements and preventing excess ROS production. Also involved in endoplasmic reticulum-specific autophagic process, in selective removal of ER-associated degradation (ERAD) substrates. Plays a key role in ATG9 and ATG23 cycling through the pre-autophagosomal structure and is necessary to promote ATG18 binding to ATG9 through phosphorylation of ATG9. Catalyzes phosphorylation of ATG4, decreasing the interaction between ATG4 and ATG8 and impairing deconjugation of PE-conjugated forms of ATG8. Required for wild-type budding of haploid sporidia and for complete symptom development during pathogenic growth such as gall formation and teliospore production in ears of mature maize. The polypeptide is Serine/threonine-protein kinase ATG1 (Mycosarcoma maydis (Corn smut fungus)).